We begin with the raw amino-acid sequence, 369 residues long: Flagellar P-ring protein 2 (369 aa).

Positions 1-24 are cleaved as a signal peptide; it reads MCAFAAILSLLSVLLMATSRSSDA.

Belongs to the FlgI family. The basal body constitutes a major portion of the flagellar organelle and consists of four rings (L,P,S, and M) mounted on a central rod.

The protein localises to the periplasm. It is found in the bacterial flagellum basal body. In terms of biological role, assembles around the rod to form the L-ring and probably protects the motor/basal body from shearing forces during rotation. This is Flagellar P-ring protein 2 from Burkholderia thailandensis (strain ATCC 700388 / DSM 13276 / CCUG 48851 / CIP 106301 / E264).